A 499-amino-acid chain; its full sequence is Serine carboxypeptidase-like 34 (499 aa).

The first 25 residues, 1–25 (MGSHSVEFSVLVLFLVSFLLGSTSA), serve as a signal peptide directing secretion. Residues asparagine 73, asparagine 124, and asparagine 158 are each glycosylated (N-linked (GlcNAc...) asparagine). 3 cysteine pairs are disulfide-bonded: cysteine 106–cysteine 383, cysteine 269–cysteine 280, and cysteine 304–cysteine 351. Residue serine 200 is part of the active site. N-linked (GlcNAc...) asparagine glycosylation is found at asparagine 310, asparagine 372, and asparagine 375. Catalysis depends on residues aspartate 419 and histidine 471.

Belongs to the peptidase S10 family. Ubiquitous.

Its subcellular location is the secreted. Its function is as follows. Probable carboxypeptidase. The chain is Serine carboxypeptidase-like 34 (SCPL34) from Arabidopsis thaliana (Mouse-ear cress).